Reading from the N-terminus, the 190-residue chain is uncharacterized protein (190 aa).

This is an uncharacterized protein from Acanthamoeba polyphaga mimivirus (APMV).